The following is a 102-amino-acid chain: UPF0122 protein MPN_424 (102 aa).

Belongs to the UPF0122 family.

Functionally, might take part in the signal recognition particle (SRP) pathway. This is inferred from the conservation of its genetic proximity to ftsY/ffh. May be a regulatory protein. The sequence is that of UPF0122 protein MPN_424 from Mycoplasma pneumoniae (strain ATCC 29342 / M129 / Subtype 1) (Mycoplasmoides pneumoniae).